A 341-amino-acid chain; its full sequence is NADH-quinone oxidoreductase subunit H 1 (341 aa).

The next 9 membrane-spanning stretches (helical) occupy residues 7–27 (IILTIAAQGLLVIAFVMISLL), 46–66 (PNVVGAFGLLQTVADAAKYIF), 80–100 (FFLAPLISFVLAVLAWAVIPF), 111–131 (VAILFVFAASSLEVYGVIMGG), 157–177 (LGLIIIGIIISTGSMNLSHIV), 183–203 (AFGLFNWYWLPHLPMVALFFI), 244–264 (YIAIFLMCALMSLLFFGGWLS), 273–293 (VFWMVAKMAFFFFLFAMVKAI), and 305–325 (IGWKVFLPFSLGWVVLVAFLA).

Belongs to the complex I subunit 1 family. NDH-1 is composed of 14 different subunits. Subunits NuoA, H, J, K, L, M, N constitute the membrane sector of the complex.

Its subcellular location is the cell inner membrane. It carries out the reaction a quinone + NADH + 5 H(+)(in) = a quinol + NAD(+) + 4 H(+)(out). Its function is as follows. NDH-1 shuttles electrons from NADH, via FMN and iron-sulfur (Fe-S) centers, to quinones in the respiratory chain. The immediate electron acceptor for the enzyme in this species is believed to be ubiquinone. Couples the redox reaction to proton translocation (for every two electrons transferred, four hydrogen ions are translocated across the cytoplasmic membrane), and thus conserves the redox energy in a proton gradient. This subunit may bind ubiquinone. The protein is NADH-quinone oxidoreductase subunit H 1 of Cereibacter sphaeroides (strain ATCC 17029 / ATH 2.4.9) (Rhodobacter sphaeroides).